The following is a 130-amino-acid chain: Ribosome-binding factor A (130 aa).

The protein belongs to the RbfA family. As to quaternary structure, monomer. Binds 30S ribosomal subunits, but not 50S ribosomal subunits or 70S ribosomes.

It localises to the cytoplasm. Its function is as follows. One of several proteins that assist in the late maturation steps of the functional core of the 30S ribosomal subunit. Associates with free 30S ribosomal subunits (but not with 30S subunits that are part of 70S ribosomes or polysomes). Required for efficient processing of 16S rRNA. May interact with the 5'-terminal helix region of 16S rRNA. The protein is Ribosome-binding factor A of Prochlorococcus marinus (strain AS9601).